Reading from the N-terminus, the 190-residue chain is Peptidoglycan recognition protein 1 (190 aa).

An N-terminal signal peptide occupies residues 1-21; the sequence is MSRRYTPLAWVLLALLGLGAA. Glutamine 22 is subject to Pyrrolidone carboxylic acid. 3 disulfide bridges follow: cysteine 24-cysteine 148, cysteine 40-cysteine 85, and cysteine 61-cysteine 67. The N-acetylmuramoyl-L-alanine amidase domain occupies 46 to 174; it reads QPVRYVVVSH…RDVQQTLSPG (129 aa).

It belongs to the N-acetylmuramoyl-L-alanine amidase 2 family. As to quaternary structure, homodimer; disulfide-linked.

The protein resides in the secreted. Its subcellular location is the cytoplasmic granule. In terms of biological role, innate immunity protein that plays several important functions in antimicrobial and antitumor defense systems. Acts as a pattern receptor that binds to murein peptidoglycans (PGN) of Gram-positive bacteria and thus provides bactericidal activity. Forms an equimolar complex with heat shock protein HSPA1A and induces programmed cell death through apoptosis and necroptosis in tumor cell lines by activating the TNFR1 receptor on the target cell membrane. In addition, acts in complex with the Ca(2+)-binding protein S100A4 as a chemoattractant able to induce lymphocyte movement. Mechanistically, this complex acts as a ligand of the chemotactic receptors CCR5 and CXCR3 which are present on the cells of the immune system. Promotes also the activation of lymphocytes that become able to kill virus-infected cells as well as tumor cells by modulating the spectrum of their target-cell specificity. Induction of cytotoxicity on monocyte surface requires interaction with TREM1 receptor. The polypeptide is Peptidoglycan recognition protein 1 (PGLYRP1) (Bos indicus (Zebu)).